A 456-amino-acid chain; its full sequence is E3 ubiquitin-protein ligase RNF25 (456 aa).

The 110-residue stretch at 18–127 (SEVEVLESIY…EKGKEILTDN (110 aa)) folds into the RWD domain. Zn(2+) contacts are provided by cysteine 134, cysteine 137, cysteine 152, histidine 154, histidine 157, cysteine 160, cysteine 195, and cysteine 198. Residues 134–199 (CVICLYGFQE…AVGVQCPVCR (66 aa)) form an RING-type zinc finger. The tract at residues 269 to 456 (LEPESAVDVS…PLGLESEEGS (188 aa)) is disordered. Residues 288-332 (SAEQSTSLADQSTLPTSLPMTTQYTYEKTSGAGPNQQRPGETQKS) are compositionally biased toward polar residues. Composition is skewed to basic and acidic residues over residues 364–388 (SEIH…EPRN) and 410–421 (RTRDCARWERSK).

The protein belongs to the RNF25 family. Interacts with UBE2D2, and may also interact with UBE2E1 and UBE2E3. Interacts with RELA/p65. Post-translationally, ubiquitinated; autoubiquitinated. In terms of tissue distribution, ubiquitous.

The protein resides in the cytoplasm. The enzyme catalyses S-ubiquitinyl-[E2 ubiquitin-conjugating enzyme]-L-cysteine + [acceptor protein]-L-lysine = [E2 ubiquitin-conjugating enzyme]-L-cysteine + N(6)-ubiquitinyl-[acceptor protein]-L-lysine.. It functions in the pathway protein modification; protein ubiquitination. Its function is as follows. E3 ubiquitin-protein ligase that plays a key role in the RNF14-RNF25 translation quality control pathway, a pathway that takes place when a ribosome has stalled during translation, and which promotes ubiquitination and degradation of translation factors on stalled ribosomes. Catalyzes ubiquitination of RPS27A in response to ribosome collisions, promoting activation of RNF14. RNF25 catalyzes ubiquitination of other ribosomal proteins on stalled ribosomes, such as RPL0, RPL1, RPL12, RPS13 and RPS17. Also involved in ubiquitination and degradation of stalled ETF1/eRF1. Independently of its function in the response to stalled ribosomes, mediates ubiquitination and subsequent proteasomal degradation of NKD2. May also stimulate transcription mediated by NF-kappa-B via its interaction with RELA/p65. The protein is E3 ubiquitin-protein ligase RNF25 of Mus musculus (Mouse).